The sequence spans 272 residues: Formamidopyrimidine-DNA glycosylase (272 aa).

Pro-2 serves as the catalytic Schiff-base intermediate with DNA. The active-site Proton donor is Glu-3. Lys-58 acts as the Proton donor; for beta-elimination activity in catalysis. His-92, Arg-111, and Arg-153 together coordinate DNA. The FPG-type zinc-finger motif lies at 238-272 (AVYGRQGQSCPRCGGLVERCRLGQRSTFFCPACQR). Arg-262 (proton donor; for delta-elimination activity) is an active-site residue.

The protein belongs to the FPG family. As to quaternary structure, monomer. The cofactor is Zn(2+).

The catalysed reaction is Hydrolysis of DNA containing ring-opened 7-methylguanine residues, releasing 2,6-diamino-4-hydroxy-5-(N-methyl)formamidopyrimidine.. The enzyme catalyses 2'-deoxyribonucleotide-(2'-deoxyribose 5'-phosphate)-2'-deoxyribonucleotide-DNA = a 3'-end 2'-deoxyribonucleotide-(2,3-dehydro-2,3-deoxyribose 5'-phosphate)-DNA + a 5'-end 5'-phospho-2'-deoxyribonucleoside-DNA + H(+). Functionally, involved in base excision repair of DNA damaged by oxidation or by mutagenic agents. Acts as a DNA glycosylase that recognizes and removes damaged bases. Has a preference for oxidized purines, such as 7,8-dihydro-8-oxoguanine (8-oxoG). Has AP (apurinic/apyrimidinic) lyase activity and introduces nicks in the DNA strand. Cleaves the DNA backbone by beta-delta elimination to generate a single-strand break at the site of the removed base with both 3'- and 5'-phosphates. The polypeptide is Formamidopyrimidine-DNA glycosylase (Laribacter hongkongensis (strain HLHK9)).